Consider the following 169-residue polypeptide: Der GTPase-activating protein YihI (169 aa).

Disordered stretches follow at residues 1 to 100 (MKPS…AELE) and 144 to 169 (GLSY…LRGN). Residues 10 to 19 (SKGHAKARRK) show a composition bias toward basic residues. Positions 20–30 (TREELDQEARD) are enriched in basic and acidic residues. Over residues 31-40 (RKRQKKRRGH) the composition is skewed to basic residues. A compositionally biased stretch (polar residues) spans 49 to 58 (GNTTSGSKGQ). Positions 147 to 159 (YDDDEEEEEDEKQ) are enriched in acidic residues. Residues 160-169 (EDMMRLLRGN) show a composition bias toward basic and acidic residues.

It belongs to the YihI family. Interacts with Der.

Functionally, a GTPase-activating protein (GAP) that modifies Der/EngA GTPase function. May play a role in ribosome biogenesis. The chain is Der GTPase-activating protein YihI from Escherichia coli O6:H1 (strain CFT073 / ATCC 700928 / UPEC).